A 173-amino-acid polypeptide reads, in one-letter code: Small ribosomal subunit protein uS5 (173 aa).

An S5 DRBM domain is found at 17 to 80 (WQERVIQIRR…ADGKKQLIEV (64 aa)).

Belongs to the universal ribosomal protein uS5 family. In terms of assembly, part of the 30S ribosomal subunit. Contacts proteins S4 and S8.

In terms of biological role, with S4 and S12 plays an important role in translational accuracy. Its function is as follows. Located at the back of the 30S subunit body where it stabilizes the conformation of the head with respect to the body. The protein is Small ribosomal subunit protein uS5 of Gloeothece citriformis (strain PCC 7424) (Cyanothece sp. (strain PCC 7424)).